The primary structure comprises 209 residues: MMKSVFFGVVAITVAILSIYQETAQAQEQTVGATDNYQWDSVDDQCLAALHRQINKEFDASIIYLKYAAYFAQEKINLPGFEKFFFHSAAEEREHGIKLIEYALMRGKAPVDKHFKLNYDHEVPTVTTGESALETALQKEVEVTKSIRGVIKACEDGSNDFHLADYLTGEYLDEQHKGQRELAEKIATLKKMKKSAPKLGEFLFDKNHM.

An N-terminal signal peptide occupies residues Met1–Gln27. One can recognise a Ferritin-like diiron domain in the interval Asp40–Lys193. Fe cation-binding residues include Glu57, Glu92, His95, Glu140, and Gln175.

The protein belongs to the ferritin family. As to quaternary structure, oligomer of 24 subunits. There are two types of subunits: L (light) chain and H (heavy) chain. The functional molecule forms a roughly spherical shell with a diameter of 12 nm and contains a central cavity into which the insoluble mineral iron core is deposited.

The protein resides in the secreted. It localises to the cytoplasm. It carries out the reaction 4 Fe(2+) + O2 + 4 H(+) = 4 Fe(3+) + 2 H2O. Functionally, stores iron in a soluble, non-toxic, readily available form. Important for iron homeostasis. Has ferroxidase activity. Iron is taken up in the ferrous form and deposited as ferric hydroxides after oxidation. The chain is Ferritin heavy chain (FERH) from Aedes aegypti (Yellowfever mosquito).